The sequence spans 176 residues: Urease accessory protein UreE (176 aa).

Residues 134–176 (EAGAYGSGGHHHHGESSQGHAHGPLAPIPVHQKIHRPSDIPSR) are disordered.

The protein belongs to the UreE family.

The protein resides in the cytoplasm. In terms of biological role, involved in urease metallocenter assembly. Binds nickel. Probably functions as a nickel donor during metallocenter assembly. This is Urease accessory protein UreE from Nitrosospira multiformis (strain ATCC 25196 / NCIMB 11849 / C 71).